The chain runs to 203 residues: Dephospho-CoA kinase (203 aa).

The region spanning 3–201 is the DPCK domain; that stretch reads SVGLTGGIGS…QRYLECAAAA (199 aa). ATP is bound at residue 11–16; the sequence is GSGKTT.

Belongs to the CoaE family.

The protein localises to the cytoplasm. The catalysed reaction is 3'-dephospho-CoA + ATP = ADP + CoA + H(+). Its pathway is cofactor biosynthesis; coenzyme A biosynthesis; CoA from (R)-pantothenate: step 5/5. Functionally, catalyzes the phosphorylation of the 3'-hydroxyl group of dephosphocoenzyme A to form coenzyme A. This is Dephospho-CoA kinase from Burkholderia pseudomallei (strain 1710b).